Consider the following 204-residue polypeptide: Large ribosomal subunit protein uL4 (204 aa).

A disordered region spans residues 49 to 76 (KTKGISDVSGTTAKPYGQKRTGRARQGS).

Belongs to the universal ribosomal protein uL4 family. In terms of assembly, part of the 50S ribosomal subunit.

Functionally, one of the primary rRNA binding proteins, this protein initially binds near the 5'-end of the 23S rRNA. It is important during the early stages of 50S assembly. It makes multiple contacts with different domains of the 23S rRNA in the assembled 50S subunit and ribosome. In terms of biological role, forms part of the polypeptide exit tunnel. This Wolbachia sp. subsp. Drosophila simulans (strain wRi) protein is Large ribosomal subunit protein uL4.